A 41-amino-acid chain; its full sequence is Photosystem I reaction center subunit IX (41 aa).

The chain crosses the membrane as a helical span at residues 7–27 (YLSTAPVVAAAWFTFTAGLLI).

It belongs to the PsaJ family.

The protein localises to the plastid. It is found in the chloroplast thylakoid membrane. Its function is as follows. May help in the organization of the PsaE and PsaF subunits. This chain is Photosystem I reaction center subunit IX, found in Oltmannsiellopsis viridis (Marine flagellate).